The primary structure comprises 363 residues: Strychnine O-methyltransferase (363 aa).

Positions 204, 227, 249, 250, and 263 each coordinate S-adenosyl-L-methionine. The active-site Proton acceptor is histidine 267.

It belongs to the class I-like SAM-binding methyltransferase superfamily. Cation-independent O-methyltransferase family.

It catalyses the reaction 10-hydroxystrychnine + S-adenosyl-L-methionine = beta-colubrine + S-adenosyl-L-homocysteine + H(+). It carries out the reaction 11-demethylbrucine + S-adenosyl-L-methionine = brucine + S-adenosyl-L-homocysteine + H(+). Its pathway is alkaloid biosynthesis. O-methyltransferase involved in the biosynthesis of curare monoterpene indole alkaloids (MIAs), natural products such as strychnine, a neurotoxic compound used as a pesticide to control rodents, and its pharmacologically active derivatives, including brucine, used to regulate blood pressure. Curare alkaloids act as animal glycine receptor antagonists. Catalyzes the conversion of 10-OH strychnine to beta-colubrine, and of 11-deMe brucine to brucine. The protein is Strychnine O-methyltransferase of Strychnos nux-vomica (Poison nut).